We begin with the raw amino-acid sequence, 646 residues long: Threonine--tRNA ligase (646 aa).

One can recognise a TGS domain in the interval 1–63 (MADLSIIFPD…SSGGSIEIIT (63 aa)). Positions 244–541 (DHRKLGKELG…LIEEYKGAFP (298 aa)) are catalytic. Residues Cys337, His388, and His518 each contribute to the Zn(2+) site.

Belongs to the class-II aminoacyl-tRNA synthetase family. Homodimer. Zn(2+) serves as cofactor.

Its subcellular location is the cytoplasm. It catalyses the reaction tRNA(Thr) + L-threonine + ATP = L-threonyl-tRNA(Thr) + AMP + diphosphate + H(+). Functionally, catalyzes the attachment of threonine to tRNA(Thr) in a two-step reaction: L-threonine is first activated by ATP to form Thr-AMP and then transferred to the acceptor end of tRNA(Thr). Also edits incorrectly charged L-seryl-tRNA(Thr). The polypeptide is Threonine--tRNA ligase (Oceanobacillus iheyensis (strain DSM 14371 / CIP 107618 / JCM 11309 / KCTC 3954 / HTE831)).